A 599-amino-acid chain; its full sequence is Dual specificity tyrosine-phosphorylation-regulated kinase 2 (599 aa).

Residues 1–55 form a disordered region; the sequence is MLTRKPSAAAPAAYPTGRGGDTAVRQLQASPGIGAGAPRSGVGTGPPSPIALPPL. Position 30 is a phosphoserine (Ser-30). The residue at position 104 (Thr-104) is a Phosphothreonine; by ATM. The Nuclear localization signal signature appears at 187–189; that stretch reads KKR. Residues 220 to 533 enclose the Protein kinase domain; the sequence is YEVLKVIGKG…PGQALRHPWL (314 aa). ATP contacts are provided by residues 226–234, Lys-249, and 299–302; these read IGKGSFGQV and FELL. Residue Asp-346 is the Proton acceptor of the active site. Position 379 is a phosphothreonine; by MAP3K10 (Thr-379). Tyr-380 carries the post-translational modification Phosphotyrosine; by autocatalysis. Ser-440 bears the Phosphoserine; by ATM mark. Ser-447 carries the post-translational modification Phosphoserine; by MAP3K10.

It belongs to the protein kinase superfamily. CMGC Ser/Thr protein kinase family. MNB/DYRK subfamily. As to quaternary structure, component of an E3 ligase complex containing DYRK2, EDD/UBR5, DDB1 and DCAF1 (EDVP complex). Interacts directly with EDD/UBR5, DDB1 and DCAF1. Interacts with SIAH2 and MDM2. Interacts with MAP3K10 and NFATC1. May also interact with CCNL2. Mg(2+) serves as cofactor. The cofactor is Mn(2+). Post-translationally, autophosphorylates cotranslationally on the second tyrosine residue in the Tyr-X-Tyr motif in the activation loop, but once mature, does not have any protein tyrosine kinase activity. Phosphorylated at Thr-104 and Ser-440 by ATM in response to genotoxic stress. In terms of processing, under normal conditions, polyubiquitinated in the nucleus by MDM2, leading to its proteasomal degradation. Phosphorylation on Thr-104 and Ser-440 by ATM in response to genotoxic stress disrupts MDM2 binding and prevents MDM2-mediated ubiquitination and subsequent proteasomal degradation. Polyubiquitinated by SIAH2, leading to its proteasomal degradation. Polyubiquitinated by SIAH2 occurs under normal conditions, and is enhanced in response to hypoxia.

The protein localises to the cytoplasm. Its subcellular location is the nucleus. It catalyses the reaction L-seryl-[protein] + ATP = O-phospho-L-seryl-[protein] + ADP + H(+). The catalysed reaction is L-threonyl-[protein] + ATP = O-phospho-L-threonyl-[protein] + ADP + H(+). It carries out the reaction L-tyrosyl-[protein] + ATP = O-phospho-L-tyrosyl-[protein] + ADP + H(+). Its activity is regulated as follows. Activated by autophosphorylation on the second tyrosine residue in the Tyr-X-Tyr motif in the activation loop. In terms of biological role, serine/threonine-protein kinase involved in the regulation of the mitotic cell cycle, cell proliferation, apoptosis, organization of the cytoskeleton and neurite outgrowth. Functions in part via its role in ubiquitin-dependent proteasomal protein degradation. Functions downstream of ATM and phosphorylates p53/TP53 at 'Ser-46', and thereby contributes to the induction of apoptosis in response to DNA damage. Phosphorylates NFATC1, and thereby inhibits its accumulation in the nucleus and its transcription factor activity. Phosphorylates EIF2B5 at 'Ser-544', enabling its subsequent phosphorylation and inhibition by GSK3B. Likewise, phosphorylation of NFATC1, CRMP2/DPYSL2 and CRMP4/DPYSL3 promotes their subsequent phosphorylation by GSK3B. May play a general role in the priming of GSK3 substrates. Inactivates GYS1 by phosphorylation at 'Ser-641', and potentially also a second phosphorylation site, thus regulating glycogen synthesis. Mediates EDVP E3 ligase complex formation and is required for the phosphorylation and subsequent degradation of KATNA1. Phosphorylates TERT at 'Ser-457', promoting TERT ubiquitination by the EDVP complex. Phosphorylates SIAH2, and thereby increases its ubiquitin ligase activity. Promotes the proteasomal degradation of MYC and JUN, and thereby regulates progress through the mitotic cell cycle and cell proliferation. Promotes proteasomal degradation of GLI2 and GLI3, and thereby plays a role in smoothened and sonic hedgehog signaling. Phosphorylates CRMP2/DPYSL2, CRMP4/DPYSL3, DCX, EIF2B5, EIF4EBP1, GLI2, GLI3, GYS1, JUN, MDM2, MYC, NFATC1, p53/TP53, TAU/MAPT and KATNA1. Can phosphorylate histone H1, histone H3 and histone H2B (in vitro). Can phosphorylate CARHSP1 (in vitro). Plays a role in cytoskeleton organization and neurite outgrowth via its phosphorylation of DCX. The protein is Dual specificity tyrosine-phosphorylation-regulated kinase 2 of Mus musculus (Mouse).